Reading from the N-terminus, the 660-residue chain is UvrABC system protein B (660 aa).

The 389-residue stretch at 26 to 414 folds into the Helicase ATP-binding domain; the sequence is KKVLAGQRHQ…PEMTEQIIRP (389 aa). 39–46 lines the ATP pocket; it reads GATGTGKT. Residues 92-115 carry the Beta-hairpin motif; sequence YYDYYQPEAYVPSTDTFIEKDASI. Residues 430-596 enclose the Helicase C-terminal domain; that stretch reads QIDNLIEEIR…TIRKEVRDVI (167 aa). Residues 624 to 659 form the UVR domain; that stretch reads EKVIEQMENEMKQAAKDLDFEKAAELRDVILELKAE.

The protein belongs to the UvrB family. As to quaternary structure, forms a heterotetramer with UvrA during the search for lesions. Interacts with UvrC in an incision complex.

It localises to the cytoplasm. The UvrABC repair system catalyzes the recognition and processing of DNA lesions. A damage recognition complex composed of 2 UvrA and 2 UvrB subunits scans DNA for abnormalities. Upon binding of the UvrA(2)B(2) complex to a putative damaged site, the DNA wraps around one UvrB monomer. DNA wrap is dependent on ATP binding by UvrB and probably causes local melting of the DNA helix, facilitating insertion of UvrB beta-hairpin between the DNA strands. Then UvrB probes one DNA strand for the presence of a lesion. If a lesion is found the UvrA subunits dissociate and the UvrB-DNA preincision complex is formed. This complex is subsequently bound by UvrC and the second UvrB is released. If no lesion is found, the DNA wraps around the other UvrB subunit that will check the other stand for damage. This Oceanobacillus iheyensis (strain DSM 14371 / CIP 107618 / JCM 11309 / KCTC 3954 / HTE831) protein is UvrABC system protein B.